The chain runs to 419 residues: L-rhamnose isomerase (419 aa).

Mn(2+)-binding residues include histidine 262, aspartate 294, and aspartate 296.

Belongs to the rhamnose isomerase family. Homotetramer. It depends on Mn(2+) as a cofactor.

It localises to the cytoplasm. It catalyses the reaction L-rhamnopyranose = L-rhamnulose. It functions in the pathway carbohydrate degradation; L-rhamnose degradation; glycerone phosphate from L-rhamnose: step 1/3. In terms of biological role, catalyzes the interconversion of L-rhamnose and L-rhamnulose. This Escherichia coli O157:H7 protein is L-rhamnose isomerase.